Consider the following 475-residue polypeptide: Ribulose bisphosphate carboxylase large chain (475 aa).

Positions 1 to 2 (MS) are excised as a propeptide. Pro-3 carries the post-translational modification N-acetylproline. N6,N6,N6-trimethyllysine is present on Lys-14. Positions 123 and 173 each coordinate substrate. Catalysis depends on Lys-175, which acts as the Proton acceptor. Lys-177 contributes to the substrate binding site. 3 residues coordinate Mg(2+): Lys-201, Asp-203, and Glu-204. Lys-201 bears the N6-carboxylysine mark. His-294 acts as the Proton acceptor in catalysis. Substrate contacts are provided by Arg-295, His-327, and Ser-379.

The protein belongs to the RuBisCO large chain family. Type I subfamily. Heterohexadecamer of 8 large chains and 8 small chains; disulfide-linked. The disulfide link is formed within the large subunit homodimers. Mg(2+) is required as a cofactor. In terms of processing, the disulfide bond which can form in the large chain dimeric partners within the hexadecamer appears to be associated with oxidative stress and protein turnover.

Its subcellular location is the plastid. It localises to the chloroplast. It carries out the reaction 2 (2R)-3-phosphoglycerate + 2 H(+) = D-ribulose 1,5-bisphosphate + CO2 + H2O. It catalyses the reaction D-ribulose 1,5-bisphosphate + O2 = 2-phosphoglycolate + (2R)-3-phosphoglycerate + 2 H(+). Functionally, ruBisCO catalyzes two reactions: the carboxylation of D-ribulose 1,5-bisphosphate, the primary event in carbon dioxide fixation, as well as the oxidative fragmentation of the pentose substrate in the photorespiration process. Both reactions occur simultaneously and in competition at the same active site. The chain is Ribulose bisphosphate carboxylase large chain from Populus tremuloides (Quaking aspen).